The chain runs to 275 residues: Formamidopyrimidine-DNA glycosylase (275 aa).

Proline 2 serves as the catalytic Schiff-base intermediate with DNA. The Proton donor role is filled by glutamate 3. The Proton donor; for beta-elimination activity role is filled by lysine 58. DNA-binding residues include histidine 91 and arginine 110. Residues 238 to 272 (QVYGQTGKPCPRCGQAIVKLKVGGRGTHICPKCQK) form an FPG-type zinc finger. Arginine 262 serves as the catalytic Proton donor; for delta-elimination activity.

The protein belongs to the FPG family. Monomer. Requires Zn(2+) as cofactor.

It catalyses the reaction Hydrolysis of DNA containing ring-opened 7-methylguanine residues, releasing 2,6-diamino-4-hydroxy-5-(N-methyl)formamidopyrimidine.. The enzyme catalyses 2'-deoxyribonucleotide-(2'-deoxyribose 5'-phosphate)-2'-deoxyribonucleotide-DNA = a 3'-end 2'-deoxyribonucleotide-(2,3-dehydro-2,3-deoxyribose 5'-phosphate)-DNA + a 5'-end 5'-phospho-2'-deoxyribonucleoside-DNA + H(+). Involved in base excision repair of DNA damaged by oxidation or by mutagenic agents. Acts as a DNA glycosylase that recognizes and removes damaged bases. Has a preference for oxidized purines, such as 7,8-dihydro-8-oxoguanine (8-oxoG). Has AP (apurinic/apyrimidinic) lyase activity and introduces nicks in the DNA strand. Cleaves the DNA backbone by beta-delta elimination to generate a single-strand break at the site of the removed base with both 3'- and 5'-phosphates. The sequence is that of Formamidopyrimidine-DNA glycosylase from Streptococcus pyogenes serotype M18 (strain MGAS8232).